The primary structure comprises 528 residues: GMP synthase [glutamine-hydrolyzing] (528 aa).

One can recognise a Glutamine amidotransferase type-1 domain in the interval Ala-13–Asp-204. Cys-90 functions as the Nucleophile in the catalytic mechanism. Catalysis depends on residues His-178 and Glu-180. The GMPS ATP-PPase domain occupies Trp-205–Arg-403. An ATP-binding site is contributed by Ser-232–Ser-238.

Homodimer.

It carries out the reaction XMP + L-glutamine + ATP + H2O = GMP + L-glutamate + AMP + diphosphate + 2 H(+). It functions in the pathway purine metabolism; GMP biosynthesis; GMP from XMP (L-Gln route): step 1/1. Its function is as follows. Catalyzes the synthesis of GMP from XMP. This Synechococcus sp. (strain CC9311) protein is GMP synthase [glutamine-hydrolyzing].